The following is a 211-amino-acid chain: Protein-L-isoaspartate O-methyltransferase (211 aa).

S62 is an active-site residue.

Belongs to the methyltransferase superfamily. L-isoaspartyl/D-aspartyl protein methyltransferase family.

It localises to the cytoplasm. The catalysed reaction is [protein]-L-isoaspartate + S-adenosyl-L-methionine = [protein]-L-isoaspartate alpha-methyl ester + S-adenosyl-L-homocysteine. Its function is as follows. Catalyzes the methyl esterification of L-isoaspartyl residues in peptides and proteins that result from spontaneous decomposition of normal L-aspartyl and L-asparaginyl residues. It plays a role in the repair and/or degradation of damaged proteins. The protein is Protein-L-isoaspartate O-methyltransferase of Shewanella oneidensis (strain ATCC 700550 / JCM 31522 / CIP 106686 / LMG 19005 / NCIMB 14063 / MR-1).